A 623-amino-acid chain; its full sequence is Bifunctional dihydrofolate reductase-thymidylate synthase (623 aa).

The region spanning 9-237 (DIYAICACCK…TTLDFLVYSK (229 aa)) is the DHFR domain. A substrate-binding site is contributed by 13–14 (IC). NADP(+) is bound by residues A15 and 38-44 (GLGNKGT). D53 is a substrate binding site. 3 consecutive repeat copies span residues 88 to 91 (GGDN), 94 to 97 (GGDN), and 100 to 103 (GGDN). The 3 X 4 AA repeats of G-G-D-N stretch occupies residues 88-103 (GGDNTSGGDNTHGGDN). Residues 115-117 (RSS), 137-139 (SKT), and D153 contribute to the NADP(+) site. Substrate-binding residues include I173, Y179, and T194. 174–181 (GGAQVYRE) contributes to the NADP(+) binding site. A disordered region spans residues 263–309 (TAMRRNVAPRTAAPPMGPHSRANGERAPPRARARRTTPRQRKTTSCT). The span at 291–304 (PRARARRTTPRQRK) shows a compositional bias: basic residues. The segment at 337–623 (QHPEYQYLGI…HDKITMEMAA (287 aa)) is thymidylate synthase. R360 contributes to the dUMP binding site. C505 is a catalytic residue. DUMP is bound by residues H506, 524–528 (QRSCD), N536, and 566–568 (HVY).

It in the N-terminal section; belongs to the dihydrofolate reductase family. This sequence in the C-terminal section; belongs to the thymidylate synthase family. As to quaternary structure, homodimer.

The enzyme catalyses (6S)-5,6,7,8-tetrahydrofolate + NADP(+) = 7,8-dihydrofolate + NADPH + H(+). The catalysed reaction is dUMP + (6R)-5,10-methylene-5,6,7,8-tetrahydrofolate = 7,8-dihydrofolate + dTMP. It functions in the pathway cofactor biosynthesis; tetrahydrofolate biosynthesis; 5,6,7,8-tetrahydrofolate from 7,8-dihydrofolate: step 1/1. Functionally, bifunctional enzyme. Involved in de novo dTMP biosynthesis. Key enzyme in folate metabolism. Catalyzes an essential reaction for de novo glycine and purine synthesis, DNA precursor synthesis, and for the conversion of dUMP to dTMP. This is Bifunctional dihydrofolate reductase-thymidylate synthase from Plasmodium vivax.